A 185-amino-acid chain; its full sequence is MAEYDADVPAGIVMTSMEAIVGWLRKTSFWPLTMGLACCAIEMISYGGPRADAARWGHEVFRASPRQADLMIVSGRVSQKMAPVVRQLYDQMPEPKWVISMGACASSGGIFNNYAVVQGCDHIVPVDVYLPGCPPSPDMLIDAVFKIREQIQHWPLMGHMSEVEAAKEKKALDAKTTLEQKGLMR.

Residues C38, C39, C104, and C133 each coordinate [4Fe-4S] cluster.

This sequence belongs to the complex I 20 kDa subunit family. NDH-1 is composed of 14 different subunits. Subunits NuoB, C, D, E, F, and G constitute the peripheral sector of the complex. The cofactor is [4Fe-4S] cluster.

The protein localises to the cell membrane. The enzyme catalyses a quinone + NADH + 5 H(+)(in) = a quinol + NAD(+) + 4 H(+)(out). NDH-1 shuttles electrons from NADH, via FMN and iron-sulfur (Fe-S) centers, to quinones in the respiratory chain. The immediate electron acceptor for the enzyme in this species is believed to be a menaquinone. Couples the redox reaction to proton translocation (for every two electrons transferred, four hydrogen ions are translocated across the cytoplasmic membrane), and thus conserves the redox energy in a proton gradient. This Cutibacterium acnes (strain DSM 16379 / KPA171202) (Propionibacterium acnes) protein is NADH-quinone oxidoreductase subunit B.